Reading from the N-terminus, the 244-residue chain is MSTSKRKRGDDANWSKRVPKKKPSSAGLKRAGSKADRPSLQIQTLQHAGTTMITVPSGGVCDLINTYARGSDEGNRHTSETLTYKIAVDYHFVADAAACRYSNTGTGVMWLVYDTTPGGQAPTPQTIFAYPDTLKAWPATWKVSRELCHRFVVKRRWLFNMETDGRIGSDIPPSNTSWKPCKRNIYFHKFTSGLGVRTQWKNVTDGGVGAIQRGALYMVIAPGNGLTFTAHGQTRLYFKSVGNQ.

The Bipartite nuclear localization signal motif lies at 1 to 24 (MSTSKRKRGDDANWSKRVPKKKPS). Positions 1–39 (MSTSKRKRGDDANWSKRVPKKKPSSAGLKRAGSKADRPS) are disordered.

This sequence belongs to the geminiviridae capsid protein family. As to quaternary structure, homomultimer. Interacts with the movement protein. Binds to single-stranded and double-stranded viral DNA.

The protein localises to the virion. It is found in the host nucleus. Encapsidates the viral genome into characteristic twinned ('geminate') particles. Binds the genomic viral ssDNA and shuttles it into and out of the cell nucleus. Plays a role in protection of the genome from degradation, virus acquisition and transmission by insect vectors, infectivity, and systemic movement. The CP of monopartite geminiviruses is absolutely essential for virus movement. The protein is Capsid protein of Avena sativa (Oat).